Here is a 552-residue protein sequence, read N- to C-terminus: MSEIALTVSMLALVAVLGLWMGNWKIYGVGLGIGGVLFGGIIVGHFAQSWQLNLNGDMLHFIQEFGLILFVYTIGIQVGPGFFSSLRVSGLRLNGFAILLVLVGGLVAAVVHKLFAVPLPIILGVFSGAVTNTPALGAGQQILTDLGSDPALVDRMGMGYAMAYPFGICGILLVMWLIRLFFRINIEQEAQAFASSLGNQRELLHTMNVAVRNPNLQGMAIKNVPLLNGEDIICSRLKRGDLLMVPAPLEKLELGDYLHLVGKRESLENARLVIGEEVDVSLSTRGTELQVVRAVVTNEKVLGSKIRDLNLKQKYDVVISRLNRSGVELVAGSNVTLQFGDILNLVGRPESIEAVAAIVGNAQQKLQQVQMLPVFIGIGLGVLLGSIPLFIPGFPAALRLGLAGGPLVAALILGRIGSIGKLYWFMPPSANLALRELGIVLFLAVVGLKSGGNFVDTLINGEGLAWIGYGALITAIPLFSVGVLARMVGKMNYLTLSGMLAGSMTDPPALAFANGLHPTSGAAALSYATVYPLAMFLRIMSPQLLAVLFWAM.

6 helical membrane passes run 4–24, 26–46, 65–85, 96–116, 117–137, and 158–178; these read IALT…MGNW, IYGV…VGHF, FGLI…FFSS, FAIL…KLFA, VPLP…PALG, and MGYA…MWLI. RCK C-terminal domains are found at residues 192 to 276 and 279 to 361; these read AFAS…VIGE and DVSL…IVGN. 6 consecutive transmembrane segments (helical) span residues 371 to 391, 393 to 413, 439 to 459, 464 to 484, 493 to 513, and 530 to 550; these read MLPV…PLFI, GFPA…ALIL, IVLF…DTLI, LAWI…VGVL, YLTL…LAFA, and VYPL…VLFW.

This sequence belongs to the AAE transporter (TC 2.A.81) family. YidE subfamily.

It localises to the cell membrane. The sequence is that of Putative transport protein Spro_0050 from Serratia proteamaculans (strain 568).